Consider the following 314-residue polypeptide: Phospholipid phosphatase-related protein type 5 (314 aa).

6 helical membrane passes run 5 to 25 (FSLT…VMLA), 61 to 81 (IPPV…IIVG), 120 to 140 (FLGI…AGQV), 194 to 214 (AALS…TIKA), 223 to 243 (VLCL…VAEY), and 250 to 270 (VIAG…CVVN).

Belongs to the PA-phosphatase related phosphoesterase family.

Its subcellular location is the cell membrane. Its function is as follows. Induces filopodia formation and promotes neurite growth. The chain is Phospholipid phosphatase-related protein type 5 from Xenopus laevis (African clawed frog).